We begin with the raw amino-acid sequence, 319 residues long: L-lactate dehydrogenase 2 (319 aa).

Residues V16, D37, K42, Y68, and 82 to 83 (GA) contribute to the NAD(+) site. Substrate contacts are provided by Q85 and R91. NAD(+)-binding positions include S104, 121 to 123 (AAN), and S146. 123–126 (NPVD) serves as a coordination point for substrate. 151–154 (DSAR) provides a ligand contact to substrate. Residue H178 is the Proton acceptor of the active site. Residue Y222 is modified to Phosphotyrosine. Position 231 (T231) interacts with substrate.

This sequence belongs to the LDH/MDH superfamily. LDH family. In terms of assembly, homotetramer.

The protein resides in the cytoplasm. It carries out the reaction (S)-lactate + NAD(+) = pyruvate + NADH + H(+). It functions in the pathway fermentation; pyruvate fermentation to lactate; (S)-lactate from pyruvate: step 1/1. Functionally, catalyzes the conversion of lactate to pyruvate (Potential). Contributes to S.aureus growth during nitrosative stress in both aerobically and anaerobically cultured cells, despite playing a secondary role in this resistance mechanism. This Staphylococcus aureus (strain Mu3 / ATCC 700698) protein is L-lactate dehydrogenase 2.